A 417-amino-acid chain; its full sequence is MEMASGGGAAAAAGGGVGGSGGGGGGGDEHRQLHGLKFGKKIYFEDAAAAAGGGGTGSGSGSASAAPPSSSSKAAGGGRGGGGKNKGKGVAAAAPPPPPPPPRCQVEGCGADLSGIKNYYCRHKVCFMHSKAPRVVVAGLEQRFCQQCSRFHLLPEFDQGKRSCRRRLAGHNERRRRPQTPLASRYGRLAASVGEHRRFRSFTLDFSYPRVPSSVRNAWPAIQPGDRISGGIQWHRNVAPHGHSSAVAGYGANTYSGQGSSSSGPPVFAGPNLPPGGCLAGVGAATDSSCALSLLSTQPWDTTTHSAAASHNQAAAMSTTTSFDGNPVAPSAMAGSYMAPSPWTGSRGHEGGGRSVAHQLPHEVSLDEVHPGPSHHAHFSGELELALQGNGPAPAPRIDPGSGSTFDQTSNTMDWSL.

2 stretches are compositionally biased toward gly residues: residues 1 to 26 (MEMASGGGAAAAAGGGVGGSGGGGGG) and 51 to 60 (AGGGGTGSGS). 2 disordered regions span residues 1–32 (MEMASGGGAAAAAGGGVGGSGGGGGGGDEHRQ) and 51–102 (AGGG…PPPP). Positions 61 to 74 (GSASAAPPSSSSKA) are enriched in low complexity. Over residues 75 to 84 (AGGGRGGGGK) the composition is skewed to gly residues. An SBP-type zinc finger spans residues 101-178 (PPRCQVEGCG…AGHNERRRRP (78 aa)). Residues Cys-104, Cys-109, Cys-126, His-129, Cys-145, Cys-148, and His-152 each contribute to the Zn(2+) site. A Bipartite nuclear localization signal motif is present at residues 161-177 (KRSCRRRLAGHNERRRR). Ser-163 is subject to Phosphoserine. Cys-164 is a Zn(2+) binding site. The disordered stretch occupies residues 387–417 (LQGNGPAPAPRIDPGSGSTFDQTSNTMDWSL). A compositionally biased stretch (polar residues) spans 402–417 (SGSTFDQTSNTMDWSL).

As to quaternary structure, interacts with PCF1 and PCF2. Interacts with IPI1. Interacts with D53. Interacts with SLR1. Interacts (via C-terminus) with SHI1. Phosphorylated at Ser-163 in response to infection by the fungal pathogen Magnaporthe oryzae. In terms of processing, ubiquitinated by IPI1, which leads to proteasomal degradation. Expressed in young panicles. Expressed in the shoot apex at both the vegetative and reproductive stages. Highly expressed in the promordia of primary and secondary branches. Highly expressed in young panicles.

The protein resides in the nucleus. Its function is as follows. Transcriptional activator that binds to the SBP-box DNA core binding motif 5'-GTAC-3'. Can target the TCP motif 5'-TGGGCC/T-3' through interaction with PCF1 and PCF2. Key regulator of the plant architecture that controls shoot branching and panicle development. Promotes panicle branching. Promotes high grain yield. Binds to the promoters of TB1 and DEP1. Suppresses rice tillering mainly through positive regulation of TB1. Regulates plant height and panicle length through positive regulation of DEP1. Repressed by D53 in strigolactone (SL) signaling. Acts with D53 to mediate the SL-regulated tiller development. Functions as a direct downstream component of D53 in regulating tiller number and SL-induced gene expression. Binds directly to the D53 promoter and plays a critical role in the negative feedback regulation of SL-induced D53 expression. Involved in defense response against pathogens. Phosphorylated at Ser-163 in response to infection by the fungal pathogen Magnaporthe oryzae. Phosphorylation reduces SPL14/IPA1 binding to the GTAC site in the DEP1 promoter and enhances binding to the TGGGCC site in the WRKY45 promoter. Binding to the promoter of the pathogen defense gene WRKY45 activates its expression, leading to enhanced disease resistance. Reduces gibberellin-mediated disease susceptibility by stabilizing SLR1. Possesses transactivation activity in yeast cells. The protein is Squamosa promoter-binding-like protein 14 of Oryza sativa subsp. japonica (Rice).